The primary structure comprises 471 residues: Vanillate/3-O-methylgallate O-demethylase (471 aa).

Tyr31 serves as a coordination point for substrate. A (6S)-5,6,7,8-tetrahydrofolate-binding site is contributed by Gln57. His60 lines the substrate pocket. The (6S)-5,6,7,8-tetrahydrofolate site is built by Gln93 and Val120. Arg122 serves as a coordination point for substrate. 2 residues coordinate (6S)-5,6,7,8-tetrahydrofolate: Gln165 and Glu215. 247 to 250 (YPSN) lines the substrate pocket. (6S)-5,6,7,8-tetrahydrofolate is bound at residue Trp256.

This sequence belongs to the GcvT family. Homodimer.

The enzyme catalyses vanillate + (6S)-5,6,7,8-tetrahydrofolate = (6S)-5-methyl-5,6,7,8-tetrahydrofolate + 3,4-dihydroxybenzoate. The catalysed reaction is 3-O-methylgallate + (6S)-5,6,7,8-tetrahydrofolate = 3,4,5-trihydroxybenzoate + (6S)-5-methyl-5,6,7,8-tetrahydrofolate. The protein operates within secondary metabolite metabolism; lignin degradation. In terms of biological role, involved in the catabolism of vanillate and syringate. Catalyzes the transfer of a methyl moiety from vanillate or 3-O-methylgallate (3MGA) to tetrahydrofolate, forming protocatechuate (PCA) or gallate, respectively, and methyl-tetrahydrofolate. Has similar activities with both substrates. Cannot use syringate. Uses an ordered, sequential kinetic mechanism. This is Vanillate/3-O-methylgallate O-demethylase from Sphingobium sp. (strain NBRC 103272 / SYK-6).